The primary structure comprises 181 residues: UPF0398 protein lmo1889 (181 aa).

The protein belongs to the UPF0398 family.

This is UPF0398 protein lmo1889 from Listeria monocytogenes serovar 1/2a (strain ATCC BAA-679 / EGD-e).